The chain runs to 173 residues: Photosystem I assembly protein Ycf3 (173 aa).

TPR repeat units follow at residues 35-68, 72-105, and 120-153; these read AFAYYRDGMSAQGDGEYAEALENYQEALRLEEDP, AFILYNMALVYASNGEHNRALEQYEQALALNAKM, and GSIAQEKGESDEADRRFDLAADFWSKAIRLAPNN.

The protein belongs to the Ycf3 family.

It localises to the cellular thylakoid membrane. Its function is as follows. Essential for the assembly of the photosystem I (PSI) complex. May act as a chaperone-like factor to guide the assembly of the PSI subunits. The protein is Photosystem I assembly protein Ycf3 of Synechococcus sp. (strain RCC307).